The primary structure comprises 220 residues: Ribose-5-phosphate isomerase A (220 aa).

Substrate is bound by residues Thr-25–Thr-28, Asp-80–Asp-83, and Lys-93–Gly-96. Glu-102 (proton acceptor) is an active-site residue. Lys-120 provides a ligand contact to substrate.

This sequence belongs to the ribose 5-phosphate isomerase family. Homodimer.

It carries out the reaction aldehydo-D-ribose 5-phosphate = D-ribulose 5-phosphate. It functions in the pathway carbohydrate degradation; pentose phosphate pathway; D-ribose 5-phosphate from D-ribulose 5-phosphate (non-oxidative stage): step 1/1. In terms of biological role, catalyzes the reversible conversion of ribose-5-phosphate to ribulose 5-phosphate. In Bacillus thuringiensis subsp. konkukian (strain 97-27), this protein is Ribose-5-phosphate isomerase A.